The primary structure comprises 1427 residues: DNA-directed RNA polymerase subunit beta' (1427 aa).

Positions 66, 68, 81, and 84 each coordinate Zn(2+). Aspartate 472, aspartate 474, and aspartate 476 together coordinate Mg(2+). Residues cysteine 815, cysteine 889, cysteine 896, and cysteine 899 each coordinate Zn(2+).

Belongs to the RNA polymerase beta' chain family. As to quaternary structure, the RNAP catalytic core consists of 2 alpha, 1 beta, 1 beta' and 1 omega subunit. When a sigma factor is associated with the core the holoenzyme is formed, which can initiate transcription. Requires Mg(2+) as cofactor. Zn(2+) serves as cofactor.

It carries out the reaction RNA(n) + a ribonucleoside 5'-triphosphate = RNA(n+1) + diphosphate. Its function is as follows. DNA-dependent RNA polymerase catalyzes the transcription of DNA into RNA using the four ribonucleoside triphosphates as substrates. The protein is DNA-directed RNA polymerase subunit beta' of Bacteroides fragilis (strain YCH46).